A 59-amino-acid polypeptide reads, in one-letter code: uncharacterized protein (59 aa).

This is an uncharacterized protein from Saccharomyces cerevisiae (strain ATCC 204508 / S288c) (Baker's yeast).